Consider the following 209-residue polypeptide: Ribosomal RNA large subunit methyltransferase E (209 aa).

Residues G63, W65, D83, D99, and D124 each contribute to the S-adenosyl-L-methionine site. K164 serves as the catalytic Proton acceptor.

Belongs to the class I-like SAM-binding methyltransferase superfamily. RNA methyltransferase RlmE family.

It is found in the cytoplasm. The enzyme catalyses uridine(2552) in 23S rRNA + S-adenosyl-L-methionine = 2'-O-methyluridine(2552) in 23S rRNA + S-adenosyl-L-homocysteine + H(+). Specifically methylates the uridine in position 2552 of 23S rRNA at the 2'-O position of the ribose in the fully assembled 50S ribosomal subunit. This Vibrio cholerae serotype O1 (strain ATCC 39541 / Classical Ogawa 395 / O395) protein is Ribosomal RNA large subunit methyltransferase E.